Reading from the N-terminus, the 292-residue chain is Acetylglutamate kinase (292 aa).

Residues 64-65 (GG), Arg86, and Asn190 contribute to the substrate site.

The protein belongs to the acetylglutamate kinase family. ArgB subfamily.

The protein resides in the cytoplasm. The enzyme catalyses N-acetyl-L-glutamate + ATP = N-acetyl-L-glutamyl 5-phosphate + ADP. The protein operates within amino-acid biosynthesis; L-arginine biosynthesis; N(2)-acetyl-L-ornithine from L-glutamate: step 2/4. Functionally, catalyzes the ATP-dependent phosphorylation of N-acetyl-L-glutamate. In Geobacter sulfurreducens (strain ATCC 51573 / DSM 12127 / PCA), this protein is Acetylglutamate kinase.